The primary structure comprises 464 residues: ATP synthase subunit beta (464 aa).

ATP is bound at residue 152–159; it reads GGAGVGKT.

This sequence belongs to the ATPase alpha/beta chains family. F-type ATPases have 2 components, CF(1) - the catalytic core - and CF(0) - the membrane proton channel. CF(1) has five subunits: alpha(3), beta(3), gamma(1), delta(1), epsilon(1). CF(0) has three main subunits: a(1), b(2) and c(9-12). The alpha and beta chains form an alternating ring which encloses part of the gamma chain. CF(1) is attached to CF(0) by a central stalk formed by the gamma and epsilon chains, while a peripheral stalk is formed by the delta and b chains.

The protein resides in the cell membrane. The enzyme catalyses ATP + H2O + 4 H(+)(in) = ADP + phosphate + 5 H(+)(out). Its function is as follows. Produces ATP from ADP in the presence of a proton gradient across the membrane. The catalytic sites are hosted primarily by the beta subunits. The protein is ATP synthase subunit beta of Ureaplasma parvum serovar 3 (strain ATCC 27815 / 27 / NCTC 11736).